The primary structure comprises 70 residues: Large ribosomal subunit protein eL38 (70 aa).

Belongs to the eukaryotic ribosomal protein eL38 family.

In Ostertagia ostertagi (Brown stomach worm), this protein is Large ribosomal subunit protein eL38 (rpl-38).